A 219-amino-acid chain; its full sequence is 7-cyano-7-deazaguanine synthase (219 aa).

Residue 10-20 (FSGGQDSTTCL) participates in ATP binding. 4 residues coordinate Zn(2+): Cys188, Cys197, Cys200, and Cys203.

It belongs to the QueC family. In terms of assembly, homodimer. Requires Zn(2+) as cofactor.

It catalyses the reaction 7-carboxy-7-deazaguanine + NH4(+) + ATP = 7-cyano-7-deazaguanine + ADP + phosphate + H2O + H(+). The protein operates within purine metabolism; 7-cyano-7-deazaguanine biosynthesis. Its function is as follows. Catalyzes the ATP-dependent conversion of 7-carboxy-7-deazaguanine (CDG) to 7-cyano-7-deazaguanine (preQ(0)). This is 7-cyano-7-deazaguanine synthase from Clostridium botulinum (strain ATCC 19397 / Type A).